Here is a 120-residue protein sequence, read N- to C-terminus: Dynein 11 kDa light chain, flagellar outer arm (120 aa).

It belongs to the dynein light chain family. Consists of at least 3 heavy chains (alpha, beta and gamma), 2 intermediate chains and 8 light chains.

The protein localises to the cytoplasm. It is found in the cytoskeleton. It localises to the flagellum axoneme. In Chlamydomonas reinhardtii (Chlamydomonas smithii), this protein is Dynein 11 kDa light chain, flagellar outer arm.